The following is a 180-amino-acid chain: Negative modulator of initiation of replication (180 aa).

Interaction with DNA stretches follow at residues 86–87, 115–119, and 149–155; these read AV, RTRVY, and NTNTGRK.

This sequence belongs to the SeqA family. Homodimer. Polymerizes to form helical filaments.

The protein resides in the cytoplasm. In terms of biological role, negative regulator of replication initiation, which contributes to regulation of DNA replication and ensures that replication initiation occurs exactly once per chromosome per cell cycle. Binds to pairs of hemimethylated GATC sequences in the oriC region, thus preventing assembly of replication proteins and re-initiation at newly replicated origins. Repression is relieved when the region becomes fully methylated. This chain is Negative modulator of initiation of replication, found in Enterobacter sp. (strain 638).